Consider the following 205-residue polypeptide: Heme-binding protein 2 (205 aa).

Positions 1–39 are disordered; the sequence is MAEPLQPDPGAAEDAAAQAVETPGWKAPEDAGPQPGSYE. Ala-2 carries the post-translational modification N-acetylalanine. The residue at position 181 (Ser-181) is a Phosphoserine.

It belongs to the HEBP family. As to quaternary structure, monomer. Interacts with LRPPRC. May interact with BCL2L1; an interaction with BCL2L1 was observed using a peptide, but not with the full-length protein. The full-length protein would have to undergo a major conformation change for the interaction to occur. Interacts with PDCD6. Detected in placenta.

It is found in the cytoplasm. The protein localises to the mitochondrion. Functionally, can promote mitochondrial permeability transition and facilitate necrotic cell death under different types of stress conditions. In Homo sapiens (Human), this protein is Heme-binding protein 2 (HEBP2).